Here is a 355-residue protein sequence, read N- to C-terminus: UPF0421 protein BCE33L2478 (355 aa).

A run of 4 helical transmembrane segments spans residues 19–39 (IAVFLTVLVCEFFNIPTIFAV), 74–94 (FTFFLGHQALSYALAAMFTIV), 109–129 (TLTAVAMIPITADHYFTAFLI), and 131–151 (LATTSTGIIVSTVVNFFILPP).

Belongs to the UPF0421 family.

The protein localises to the cell membrane. The polypeptide is UPF0421 protein BCE33L2478 (Bacillus cereus (strain ZK / E33L)).